The chain runs to 538 residues: Atos homolog protein B (538 aa).

Composition is skewed to polar residues over residues 1-12 (MRHVQAETSPSS) and 129-141 (GGSS…SGAR). 3 disordered regions span residues 1–98 (MRHV…EPPT), 129–185 (GGSS…QLHT), and 201–303 (LVSG…PTDC). The span at 227 to 238 (HTPPGPGPPGPC) shows a compositional bias: pro residues. Phosphoserine is present on residues Ser254 and Ser255. Positions 348-430 (LLGNFEESLL…VPKVGTIQVT (83 aa)) are required for macropage invasion. The tract at residues 436–444 (QTVVKMFLV) is transactivation domain 1 (TAD1).

It belongs to the ATOS family.

The protein resides in the nucleus. Functionally, transcription regulator that may syncronize transcriptional and translational programs. This is Atos homolog protein B from Bos taurus (Bovine).